Consider the following 240-residue polypeptide: Ribosomal RNA small subunit methyltransferase G (240 aa).

S-adenosyl-L-methionine-binding positions include Gly-78, Phe-83, 129–130 (AE), and Arg-147. Residues 218–240 (RRQTSKKYPRKPGTPNKSPLLEN) are disordered.

It belongs to the methyltransferase superfamily. RNA methyltransferase RsmG family.

The protein localises to the cytoplasm. Functionally, specifically methylates the N7 position of guanine in position 535 of 16S rRNA. The polypeptide is Ribosomal RNA small subunit methyltransferase G (Staphylococcus haemolyticus (strain JCSC1435)).